A 458-amino-acid polypeptide reads, in one-letter code: Bifunctional protein GlmU (458 aa).

The tract at residues 1-229 is pyrophosphorylase; the sequence is MKEKALSIVI…FMEVEGVNNR (229 aa). Residues 11-14, lysine 25, glutamine 76, 81-82, 103-105, glycine 140, glutamate 154, asparagine 169, and asparagine 227 contribute to the UDP-N-acetyl-alpha-D-glucosamine site; these read LAAG, GT, and YGD. A Mg(2+)-binding site is contributed by aspartate 105. Position 227 (asparagine 227) interacts with Mg(2+). The interval 230 to 250 is linker; it reads QQLARLERYYQRKQADNLLLA. The segment at 251–458 is N-acetyltransferase; sequence GVALADPERF…WQRPTKQTKK (208 aa). UDP-N-acetyl-alpha-D-glucosamine contacts are provided by arginine 333 and lysine 351. Histidine 363 serves as the catalytic Proton acceptor. The UDP-N-acetyl-alpha-D-glucosamine site is built by tyrosine 366 and asparagine 377. Acetyl-CoA-binding positions include alanine 380, 386-387, serine 405, alanine 423, and arginine 440; that span reads NY.

It in the N-terminal section; belongs to the N-acetylglucosamine-1-phosphate uridyltransferase family. The protein in the C-terminal section; belongs to the transferase hexapeptide repeat family. As to quaternary structure, homotrimer. Requires Mg(2+) as cofactor.

The protein resides in the cytoplasm. It catalyses the reaction alpha-D-glucosamine 1-phosphate + acetyl-CoA = N-acetyl-alpha-D-glucosamine 1-phosphate + CoA + H(+). It carries out the reaction N-acetyl-alpha-D-glucosamine 1-phosphate + UTP + H(+) = UDP-N-acetyl-alpha-D-glucosamine + diphosphate. It functions in the pathway nucleotide-sugar biosynthesis; UDP-N-acetyl-alpha-D-glucosamine biosynthesis; N-acetyl-alpha-D-glucosamine 1-phosphate from alpha-D-glucosamine 6-phosphate (route II): step 2/2. It participates in nucleotide-sugar biosynthesis; UDP-N-acetyl-alpha-D-glucosamine biosynthesis; UDP-N-acetyl-alpha-D-glucosamine from N-acetyl-alpha-D-glucosamine 1-phosphate: step 1/1. The protein operates within bacterial outer membrane biogenesis; LPS lipid A biosynthesis. Its function is as follows. Catalyzes the last two sequential reactions in the de novo biosynthetic pathway for UDP-N-acetylglucosamine (UDP-GlcNAc). The C-terminal domain catalyzes the transfer of acetyl group from acetyl coenzyme A to glucosamine-1-phosphate (GlcN-1-P) to produce N-acetylglucosamine-1-phosphate (GlcNAc-1-P), which is converted into UDP-GlcNAc by the transfer of uridine 5-monophosphate (from uridine 5-triphosphate), a reaction catalyzed by the N-terminal domain. This chain is Bifunctional protein GlmU, found in Pasteurella multocida (strain Pm70).